The following is a 166-amino-acid chain: Protein TIFY 11e (166 aa).

In terms of domain architecture, Tify spans 65 to 100 (ASSAAAQMTIFYGGRVLVLDECPADRAAALLRLAAS). The Jas signature appears at 123-148 (PVARKASLQRFMEKRKGRLAARGQPY). The Nuclear localization signal motif lies at 125–132 (ARKASLQR).

It belongs to the TIFY/JAZ family. In terms of processing, ubiquitinated. Targeted for degradation by the SCF(COI1) E3 ubiquitin ligase-proteasome pathway during jasmonate signaling.

The protein resides in the nucleus. Its function is as follows. Repressor of jasmonate responses. This is Protein TIFY 11e from Oryza sativa subsp. japonica (Rice).